A 272-amino-acid chain; its full sequence is Phosphate import ATP-binding protein PstB 1 (272 aa).

The region spanning 26-267 (LEIRNLDLRY…PKKRKTEDYI (242 aa)) is the ABC transporter domain. 58 to 65 (GPSGCGKS) lines the ATP pocket.

Belongs to the ABC transporter superfamily. Phosphate importer (TC 3.A.1.7) family. In terms of assembly, the complex is composed of two ATP-binding proteins (PstB), two transmembrane proteins (PstC and PstA) and a solute-binding protein (PstS).

It is found in the cell inner membrane. It carries out the reaction phosphate(out) + ATP + H2O = ADP + 2 phosphate(in) + H(+). Its function is as follows. Part of the ABC transporter complex PstSACB involved in phosphate import. Responsible for energy coupling to the transport system. This chain is Phosphate import ATP-binding protein PstB 1, found in Shewanella oneidensis (strain ATCC 700550 / JCM 31522 / CIP 106686 / LMG 19005 / NCIMB 14063 / MR-1).